The primary structure comprises 20 residues: Large ribosomal subunit protein uL10 (20 aa).

Belongs to the universal ribosomal protein uL10 family. Part of the ribosomal stalk of the 50S ribosomal subunit. The N-terminus interacts with L11 and the large rRNA to form the base of the stalk. The C-terminus forms an elongated spine to which L12 dimers bind in a sequential fashion forming a multimeric L10(L12)X complex.

Its function is as follows. Forms part of the ribosomal stalk, playing a central role in the interaction of the ribosome with GTP-bound translation factors. The sequence is that of Large ribosomal subunit protein uL10 (rplJ) from Citrobacter freundii.